We begin with the raw amino-acid sequence, 450 residues long: Beclin-1 (450 aa).

M1 is subject to N-acetylmethionine. Residues S15 and S30 each carry the phosphoserine modification. The tract at residues 48-72 (TTAQAKPGETQEEETNSGEEPFIET) is disordered. A phosphoserine; by AMPK mark is found at S90, S93, and S96. A BH3 motif is present at residues 108 to 127 (TMENLSRRLKVTGDLFDIMS). Residues 112–159 (LSRRLKVTGDLFDIMSGQTDVDHPLCEECTDTLLDQLDTQLNVTENEC) form an interaction with BCL2 and BCL2L1 isoform Bcl-X(L) region. Residue T119 is modified to Phosphothreonine; by DAPK1. Residues 142–270 (DTLLDQLDTQ…LDKLKKTNVF (129 aa)) adopt a coiled-coil conformation. An evolutionary conserved domain (ECD) region spans residues 245–450 (DELKSVENQM…AWVSSQFYNK (206 aa)). Residues K402 and K437 each participate in a glycyl lysine isopeptide (Lys-Gly) (interchain with G-Cter in ubiquitin) cross-link. Residues 425 to 450 (WTKALKFMLTNLKWGLAWVSSQFYNK) form a required for membrane-association region.

Belongs to the beclin family. A homodimeric form is proposed to exist; this metastable form readily transits to ATG14- or UVRAG-containing complexes with BECN1:UVRAG being more stable than BECN1:ATG14. Component of the PI3K (PI3KC3/PI3K-III/class III phosphatidylinositol 3-kinase) complex the core of which is composed of the catalytic subunit PIK3C3, the regulatory subunit PIK3R4 and BECN1 associating with additional regulatory/auxiliary subunits to form alternative complex forms. Alternative complex forms containing a fourth regulatory subunit in a mutually exclusive manner are PI3K complex I (PI3KC3-C1) containing ATG14, and PI3K complex II (PI3KC3-C2) containing UVRAG. PI3KC3-C1 displays a V-shaped architecture with PIK3R4 serving as a bridge between PIK3C3 and the ATG14:BECN1 subcomplex. Both, PI3KC3-C1 and PI3KC3-C2, can associate with further regulatory subunits, such as RUBCN, SH3GLB1/Bif-1 and AMBRA1. PI3KC3-C1 probably associates with PIK3CB. Forms a complex with PPP2CA and AMBRA1; AMBRA1 and BECN1 components of the complex regulate MYC stability via different pathways. Component of the complex, at least composed of LRPPRC, BECN1 and BCL2; the interactions prevent BECN1 from forming an autophagy-inducing complex with PIK3C3. Interacts with AMBRA1, GOPC, GRID2. Interacts with BCL2 and BCL2L1 isoform Bcl-X(L); the interaction inhibits BECN1 function in promoting autophagy by interfering with the formation of the PI3K complex. Interacts with cytosolic HMGB1; inhibits the interaction of BECN1 and BCL2 leading to promotion of autophagy. Interacts with USP10, USP13, VMP1, DAPK1, RAB39A. Interacts with the poly-Gln domain of ATXN3; the interaction causes deubiquitination at Lys-402 and stabilizes BECN1. Interacts with SLAMF1. Interacts with TRIM5; the interaction causes activation of BECN1 by causing its dissociation from its inhibitors BCL2 and TAB2. Interacts with active ULK1 (phosphorylated on 'Ser-317') and MEFV simultaneously. Interacts with WDR81 and WDR91; negatively regulates the PI3 kinase/PI3K activity associated with endosomal membranes. Interacts with LAPTM4B; competes with EGFR for LAPTM4B binding; regulates EGFR activity. Interacts with TRIM50. Interacts with TRIM16. Interacts with ATG14; this interaction is increased in the absence of TMEM39A. Interacts with WASHC1; preventing interaction with AMBRA1 and the DCX(AMBRA1) complex and subsequent ubiquitination. Interacts with TRIM17. Interacts with BCL2L10/BCL-B (via BH1 domain). Interacts with SH3BGRL. Interacts with IRGM; enhancing BECN1-interacting partners and influencing the composition of the BECN1 complex. Interacts with ARMC3. Interacts with LRPPRC. In terms of assembly, (Microbial infection) Interacts with human cytomegalovirus/HHV-5 protein TRS1. As to quaternary structure, (Microbial infection) Interacts with murine gammaherpesvirus 68 M11. (Microbial infection) Interacts with herpes simplex virus 1 (HHV-1) protein ICP34.5; this interaction antagonizes the host autophagy response. In terms of assembly, (Microbial infection) Interacts with Epstein-Barr virus protein BHRF1; this interaction inhibits BECN1-mediated autophagy induction. In terms of processing, phosphorylation at Thr-119 by DAPK1 reduces its interaction with BCL2 and BCL2L1 and promotes induction of autophagy. In response to autophagic stimuli, phosphorylated at serine residues by AMPK in an ATG14-dependent manner, and this phosphorylation is critical for maximally efficient autophagy. Post-translationally, polyubiquitinated by NEDD4, both with 'Lys-11'- and 'Lys-63'-linkages. 'Lys-11'-linked polyubiquitination leads to degradation and is enhanced when the stabilizing interaction partner VPS34 is depleted. Deubiquitinated by USP10 and USP13, leading to stabilize the PIK3C3/VPS34-containing complexes. Polyubiquitinated at Lys-402 with 'Lys-48'-linkages. 'Lys-48'-linked polyubiquitination of Lys-402 leads to degradation. Deubiquitinated by ATXN3, leading to stabilization. Ubiquitinated at Lys-437 via 'Lys-63'-linkage by the DCX(AMBRA1) complex, thereby increasing the association between BECN1 and PIK3C3 to promote PIK3C3 activity. 'Lys-48'-linked ubiquitination by RNF216 leads to proteasomal degradation and autophagy inhibition. Proteolytically processed by caspases including CASP8 and CASP3; the C-terminal fragments lack autophagy-inducing capacity and are proposed to induce apoptosis. Thus the cleavage is proposed to be an determinant to switch from autophagy to apoptosis pathways affecting cellular homeostasis including viral infections and survival of tumor cells. Ubiquitous.

Its subcellular location is the cytoplasm. The protein localises to the golgi apparatus. It is found in the trans-Golgi network membrane. The protein resides in the endosome membrane. It localises to the endoplasmic reticulum membrane. Its subcellular location is the mitochondrion membrane. The protein localises to the endosome. It is found in the cytoplasmic vesicle. The protein resides in the autophagosome. It localises to the mitochondrion. Its subcellular location is the nucleus. Its function is as follows. Plays a central role in autophagy. Acts as a core subunit of the PI3K complex that mediates formation of phosphatidylinositol 3-phosphate; different complex forms are believed to play a role in multiple membrane trafficking pathways: PI3KC3-C1 is involved in initiation of autophagosomes and PI3KC3-C2 in maturation of autophagosomes and endocytosis. Involved in regulation of degradative endocytic trafficking and required for the abscission step in cytokinesis, probably in the context of PI3KC3-C2. Essential for the formation of PI3KC3-C2 but not PI3KC3-C1 PI3K complex forms. Involved in endocytosis. May play a role in antiviral host defense. Functionally, beclin-1-C 35 kDa localized to mitochondria can promote apoptosis; it induces the mitochondrial translocation of BAX and the release of proapoptotic factors. In terms of biological role, (Microbial infection) Protects against infection by a neurovirulent strain of Sindbis virus. In Homo sapiens (Human), this protein is Beclin-1 (BECN1).